The sequence spans 104 residues: Elicitor peptide 6 (104 aa).

The propeptide occupies 1 to 81 (MEVNGEEERR…TVEETGFMAR (81 aa)). Residues 48 to 61 (SSSIPPSSSSSSPS) are compositionally biased toward low complexity. The interval 48–104 (SSSIPPSSSSSSPSLVEEEDSGTETVEETGFMARITAVLRRRPRPPPYSSGRPGQNN) is disordered. Residues 63-74 (VEEEDSGTETVE) are compositionally biased toward acidic residues.

This sequence belongs to the brassicaceae elicitor peptide family.

Functionally, elicitor of plant defense. The protein is Elicitor peptide 6 (PEP6) of Arabidopsis thaliana (Mouse-ear cress).